Reading from the N-terminus, the 443-residue chain is Phosphoglucosamine mutase (443 aa).

The active-site Phosphoserine intermediate is serine 101. Mg(2+)-binding residues include serine 101, aspartate 239, aspartate 241, and aspartate 243. Residue serine 101 is modified to Phosphoserine.

This sequence belongs to the phosphohexose mutase family. It depends on Mg(2+) as a cofactor. Post-translationally, activated by phosphorylation.

It carries out the reaction alpha-D-glucosamine 1-phosphate = D-glucosamine 6-phosphate. Its function is as follows. Catalyzes the conversion of glucosamine-6-phosphate to glucosamine-1-phosphate. This Francisella philomiragia subsp. philomiragia (strain ATCC 25017 / CCUG 19701 / FSC 153 / O#319-036) protein is Phosphoglucosamine mutase.